The sequence spans 386 residues: Probable dual-specificity RNA methyltransferase RlmN (386 aa).

Glu-123 functions as the Proton acceptor in the catalytic mechanism. A Radical SAM core domain is found at 129 to 372; that stretch reads YPTRTTLCIS…ATLRDTRGQD (244 aa). An intrachain disulfide couples Cys-136 to Cys-377. [4Fe-4S] cluster-binding residues include Cys-143, Cys-147, and Cys-150. S-adenosyl-L-methionine is bound by residues 198 to 199, Ser-232, 255 to 257, and Asn-334; these read GE and SLH. The active-site S-methylcysteine intermediate is the Cys-377.

Belongs to the radical SAM superfamily. RlmN family. [4Fe-4S] cluster serves as cofactor.

It is found in the cytoplasm. The catalysed reaction is adenosine(2503) in 23S rRNA + 2 reduced [2Fe-2S]-[ferredoxin] + 2 S-adenosyl-L-methionine = 2-methyladenosine(2503) in 23S rRNA + 5'-deoxyadenosine + L-methionine + 2 oxidized [2Fe-2S]-[ferredoxin] + S-adenosyl-L-homocysteine. The enzyme catalyses adenosine(37) in tRNA + 2 reduced [2Fe-2S]-[ferredoxin] + 2 S-adenosyl-L-methionine = 2-methyladenosine(37) in tRNA + 5'-deoxyadenosine + L-methionine + 2 oxidized [2Fe-2S]-[ferredoxin] + S-adenosyl-L-homocysteine. In terms of biological role, specifically methylates position 2 of adenine 2503 in 23S rRNA and position 2 of adenine 37 in tRNAs. The sequence is that of Probable dual-specificity RNA methyltransferase RlmN from Bifidobacterium adolescentis (strain ATCC 15703 / DSM 20083 / NCTC 11814 / E194a).